Consider the following 169-residue polypeptide: Putative adenylate kinase (169 aa).

Residues Gly-10, Gly-12, Lys-13, Thr-14, and Thr-15 each contribute to the ATP site. The tract at residues His-28–Val-51 is NMP. An LID region spans residues Asp-98 to Glu-108. An ATP-binding site is contributed by Arg-99.

It belongs to the adenylate kinase family. AK6 subfamily. In terms of assembly, interacts with uS11. Not a structural component of 40S pre-ribosomes, but transiently interacts with them by binding to uS11.

The catalysed reaction is AMP + ATP = 2 ADP. The enzyme catalyses ATP + H2O = ADP + phosphate + H(+). Functionally, broad-specificity nucleoside monophosphate (NMP) kinase that catalyzes the reversible transfer of the terminal phosphate group between nucleoside triphosphates and monophosphates. Also has ATPase activity. Involved in the late maturation steps of the 30S ribosomal particles, specifically 16S rRNA maturation. While NMP activity is not required for ribosome maturation, ATPase activity is. Associates transiently with small ribosomal subunit protein uS11. ATP hydrolysis breaks the interaction with uS11. May temporarily remove uS11 from the ribosome to enable a conformational change of the ribosomal RNA that is needed for the final maturation step of the small ribosomal subunit. In Halobacterium salinarum (strain ATCC 29341 / DSM 671 / R1), this protein is Putative adenylate kinase.